Here is a 73-residue protein sequence, read N- to C-terminus: MKPINIQDQFLNQIRKENTYVTVFLLNGFQLRGQVKGFDNFTVLLESEGKQQLIYKHAISTFAPQKNVQLELE.

The Sm domain maps to aspartate 8–valine 68.

It belongs to the Hfq family. In terms of assembly, homohexamer.

RNA chaperone that binds small regulatory RNA (sRNAs) and mRNAs to facilitate mRNA translational regulation in response to envelope stress, environmental stress and changes in metabolite concentrations. Also binds with high specificity to tRNAs. This Bacillus subtilis (strain 168) protein is RNA-binding protein Hfq.